We begin with the raw amino-acid sequence, 401 residues long: Ureide permease 4 (401 aa).

The Extracellular segment spans residues 1–10 (MYVVESKAGA). The helical transmembrane segment at 11 to 31 (IGCMILSLCCLGSWPAILTLL) threads the bilayer. Residues 32–40 (ERRGRLPQH) lie on the Cytoplasmic side of the membrane. The chain crosses the membrane as a helical span at residues 41-61 (TFLDFATANLLAAIVIAFSLG). The Extracellular segment spans residues 62-81 (EIGKSTFLKPDFTTQLPQDN). Residues 82-102 (WPSVLLAVAGGVLLSIGNLAT) form a helical membrane-spanning segment. Topologically, residues 103-104 (QY) are cytoplasmic. Residues 105 to 125 (AFAFVGLSVTEVITASITVVI) traverse the membrane as a helical segment. Residues 126-141 (GTTLNYFLDNKINKAE) lie on the Extracellular side of the membrane. A helical membrane pass occupies residues 142 to 162 (ILFPGVGCFLIAVFLGAAVHA). Over 163 to 231 (SNAADVKEKL…KRAIKVFGKS (69 aa)) the chain is Cytoplasmic. 224 to 231 (AIKVFGKS) is a binding site for ATP. Residues 232–252 (IMIGLFITLFAGISLSLFSPA) form a helical membrane-spanning segment. Over 253–275 (FNLATNDQWSTLPKGVPKLVVYT) the chain is Extracellular. A helical membrane pass occupies residues 276-296 (AFFYFSIAGFLISLILNLIFL). At 297–318 (YRPMVGLARSSLKKYIYDSKGR) the chain is on the cytoplasmic side. Residues 319 to 339 (GWAVFAGFLCGFGNGLQFMGG) form a helical membrane-spanning segment. At 340 to 344 (QAAGY) the chain is on the extracellular side. A helical transmembrane segment spans residues 345 to 365 (AAADSVQALPLVSTFWGIVLF). Residues 366-374 (GEYRKSSKR) are Cytoplasmic-facing. Residues 375 to 395 (TYALLVSMLAMFVAAVAILMA) form a helical membrane-spanning segment. Residues 396–401 (SSGHRK) lie on the Extracellular side of the membrane.

It belongs to the plant ureide permease (TC 2.A.7.19) family. Expressed in developing seedlings, flower filaments and stigma, and the top and bottom parts of carpels in siliques.

Its subcellular location is the membrane. In terms of biological role, proton-coupled transporter that transports a wide spectrum of oxo derivatives of heterocyclic nitrogen compounds. The protein is Ureide permease 4 of Arabidopsis thaliana (Mouse-ear cress).